Reading from the N-terminus, the 66-residue chain is Large ribosomal subunit protein bL33c (66 aa).

It belongs to the bacterial ribosomal protein bL33 family.

The protein resides in the plastid. The protein localises to the chloroplast. The protein is Large ribosomal subunit protein bL33c of Adiantum capillus-veneris (Maidenhair fern).